Consider the following 277-residue polypeptide: MRSIFIILIFLLFLSSCSEEKAQDKNHEEKQIIEHETQNNETSKATNQEAVNSENTTESIVPANDNNQTDEVSTPASQKQKNPAIKAVKVTFKVDDNDMVLGNKKSNVIVVEYFSPTCPHCAYYHQTIFPELKKKYIDTNKIAYVVREFIATKQDLDAAILARCKGDTNSFTQLHNIILIQQDKWAYSNKYRELLTDIGQLGGISPEEYKQCLNNDKITAILIANTNFVAKAPQFIGTPSFFVNGVQTGNYSIDTISTAVDKALEEQKEKAKNEMSL.

An N-terminal signal peptide occupies residues 1-22 (MRSIFIILIFLLFLSSCSEEKA). The interval 34–80 (EHETQNNETSKATNQEAVNSENTTESIVPANDNNQTDEVSTPASQKQ) is disordered. The span at 39–80 (NNETSKATNQEAVNSENTTESIVPANDNNQTDEVSTPASQKQ) shows a compositional bias: polar residues. Positions 76–265 (ASQKQKNPAI…ISTAVDKALE (190 aa)) constitute a Thioredoxin domain. C118 and C121 form a disulfide bridge.

Belongs to the thioredoxin family. DsbA subfamily.

The protein localises to the periplasm. Its function is as follows. May be required for disulfide bond formation in some proteins. The polypeptide is Putative protein-disulfide oxidoreductase RC0029 (Rickettsia conorii (strain ATCC VR-613 / Malish 7)).